A 383-amino-acid chain; its full sequence is MSVECSGELFFYPPFTTMSKELISVHNPNPEPVIFKVKTTAPKHYCVRPNSGKIEPKSTVNVQVLLQAMKEEPAPDFKCRDKFLIQSMAIGDADTSNVENYHEFWTEMEKQGRSIFDRKIRCVYSTKQPPQSADKQVENTSTSNPPVSVEGSENLASSVGGPTAVGVSLDEAQNDFNGAKDHLSNGVNTVVPDSTFRSTFESAQIPDASVVQTVVTDADNGAASVKDTIVTAESASSKGADVARSKVQDIIDNEIPKPSESPRRSVSSTPPVHPPPPVPQNLSAVNEEFDTKKNDFDSKLPESTPAVEKVSENLGSETRESLQGAKPAAGAHSSDNALEQIKPSYSADPSSSTGASLTESPGIPPNIVIILCLIFFLIGYLFF.

Positions 1–123 (MSVECSGELF…SIFDRKIRCV (123 aa)) constitute an MSP domain. The Cytoplasmic portion of the chain corresponds to 1–362 (MSVECSGELF…TGASLTESPG (362 aa)). Polar residues predominate over residues 127 to 146 (KQPPQSADKQVENTSTSNPP). Disordered stretches follow at residues 127 to 160 (KQPPQSADKQVENTSTSNPPVSVEGSENLASSVG) and 233 to 359 (ESAS…SLTE). A phosphoserine mark is found at Ser236, Ser237, Ser259, Ser261, and Ser268. The span at 241 to 263 (DVARSKVQDIIDNEIPKPSESPR) shows a compositional bias: basic and acidic residues. Residues 289-300 (FDTKKNDFDSKL) show a composition bias toward basic and acidic residues. Positions 347 to 359 (ADPSSSTGASLTE) are enriched in polar residues. Residues 363–383 (IPPNIVIILCLIFFLIGYLFF) traverse the membrane as a helical; Anchor for type IV membrane protein segment.

Belongs to the VAMP-associated protein (VAP) (TC 9.B.17) family. Interacts (via MSP domain) with duc1 (via FFAT-motif); the interaction is direct and serves to restrict the localization of duc1 to areas of cell membrane-endoplasmic reticulum contact sites, and away from the cell division site. Interacts with epr1.

The protein localises to the endoplasmic reticulum membrane. Vesicle-associated membrane protein-associated protein (VAP) implicated in maintaining the cortical endoplasmic reticulum (ER)-plasma membrane (PM) attachment. ER-PM contacts function to modulate the distribution of contractile ring components to ensure robust ring assembly. ER-PM contacts function also in controlling exocytosis and maintenance of cell polarity regulating cell shape. VAPs play an important role in regulating eisosome assembly. VAPs also contribute to ER-phagy by tethering atg8 to the ER membrane, but also by maintaining the ER-plasma membrane contact. Restricts the localization of duc1 away from the site of cell division. This Schizosaccharomyces pombe (strain 972 / ATCC 24843) (Fission yeast) protein is Vesicle-associated membrane protein-associated protein scs2 (scs2).